Consider the following 814-residue polypeptide: Acyl-coenzyme A dehydrogenase (814 aa).

Glutamate 497 serves as the catalytic Proton acceptor.

This sequence belongs to the acyl-CoA dehydrogenase family. Requires FAD as cofactor.

The catalysed reaction is a medium-chain 2,3-saturated fatty acyl-CoA + oxidized [electron-transfer flavoprotein] + H(+) = a medium-chain (2E)-enoyl-CoA + reduced [electron-transfer flavoprotein]. It catalyses the reaction a long-chain 2,3-saturated fatty acyl-CoA + oxidized [electron-transfer flavoprotein] + H(+) = a long-chain (2E)-enoyl-CoA + reduced [electron-transfer flavoprotein]. Its pathway is lipid metabolism; fatty acid beta-oxidation. Functionally, catalyzes the dehydrogenation of acyl-coenzymes A (acyl-CoAs) to 2-enoyl-CoAs, the first step of the beta-oxidation cycle of fatty acid degradation. Is required for E.coli to utilize dodecanoate or oleate as the sole carbon and energy source for growth. The chain is Acyl-coenzyme A dehydrogenase from Escherichia coli (strain K12).